The following is a 119-amino-acid chain: uncharacterized protein (119 aa).

The segment at 78–119 (SHRKSQQHQTQGNQVLRGTRKLESPTVGPRPGLRRQHTRNFL) is disordered. The segment covering 84–93 (QHQTQGNQVL) has biased composition (polar residues). The segment covering 109-119 (GLRRQHTRNFL) has biased composition (basic residues).

This is an uncharacterized protein from Saccharomyces cerevisiae (strain ATCC 204508 / S288c) (Baker's yeast).